Consider the following 313-residue polypeptide: 4-hydroxy-3-methylbut-2-enyl diphosphate reductase (313 aa).

Cys-12 contacts [4Fe-4S] cluster. Residues His-41 and His-74 each coordinate (2E)-4-hydroxy-3-methylbut-2-enyl diphosphate. Residues His-41 and His-74 each contribute to the dimethylallyl diphosphate site. Residues His-41 and His-74 each coordinate isopentenyl diphosphate. Cys-96 provides a ligand contact to [4Fe-4S] cluster. His-124 serves as a coordination point for (2E)-4-hydroxy-3-methylbut-2-enyl diphosphate. A dimethylallyl diphosphate-binding site is contributed by His-124. Residue His-124 participates in isopentenyl diphosphate binding. Glu-126 acts as the Proton donor in catalysis. Residue Thr-164 participates in (2E)-4-hydroxy-3-methylbut-2-enyl diphosphate binding. [4Fe-4S] cluster is bound at residue Cys-194. Residues Ser-222, Ser-223, Asn-224, and Ser-266 each coordinate (2E)-4-hydroxy-3-methylbut-2-enyl diphosphate. Dimethylallyl diphosphate is bound by residues Ser-222, Ser-223, Asn-224, and Ser-266. Residues Ser-222, Ser-223, Asn-224, and Ser-266 each contribute to the isopentenyl diphosphate site.

This sequence belongs to the IspH family. The cofactor is [4Fe-4S] cluster.

It carries out the reaction isopentenyl diphosphate + 2 oxidized [2Fe-2S]-[ferredoxin] + H2O = (2E)-4-hydroxy-3-methylbut-2-enyl diphosphate + 2 reduced [2Fe-2S]-[ferredoxin] + 2 H(+). The enzyme catalyses dimethylallyl diphosphate + 2 oxidized [2Fe-2S]-[ferredoxin] + H2O = (2E)-4-hydroxy-3-methylbut-2-enyl diphosphate + 2 reduced [2Fe-2S]-[ferredoxin] + 2 H(+). It participates in isoprenoid biosynthesis; dimethylallyl diphosphate biosynthesis; dimethylallyl diphosphate from (2E)-4-hydroxy-3-methylbutenyl diphosphate: step 1/1. It functions in the pathway isoprenoid biosynthesis; isopentenyl diphosphate biosynthesis via DXP pathway; isopentenyl diphosphate from 1-deoxy-D-xylulose 5-phosphate: step 6/6. Its function is as follows. Catalyzes the conversion of 1-hydroxy-2-methyl-2-(E)-butenyl 4-diphosphate (HMBPP) into a mixture of isopentenyl diphosphate (IPP) and dimethylallyl diphosphate (DMAPP). Acts in the terminal step of the DOXP/MEP pathway for isoprenoid precursor biosynthesis. This chain is 4-hydroxy-3-methylbut-2-enyl diphosphate reductase, found in Burkholderia pseudomallei (strain 1026b).